The following is a 285-amino-acid chain: Nucleotide-binding protein in ptsN-ptsO intergenic region (285 aa).

An ATP-binding site is contributed by 8 to 15 (GRSGSGKS). 60-63 (DARN) is a GTP binding site.

Belongs to the RapZ-like family.

In terms of biological role, displays ATPase and GTPase activities. The chain is Nucleotide-binding protein in ptsN-ptsO intergenic region from Stutzerimonas stutzeri (Pseudomonas stutzeri).